Consider the following 275-residue polypeptide: NH(3)-dependent NAD(+) synthetase (275 aa).

Gly-47 to Ser-54 is a binding site for ATP. Residue Asp-53 participates in Mg(2+) binding. Position 139 (Arg-139) interacts with deamido-NAD(+). Thr-159 is an ATP binding site. Glu-164 contributes to the Mg(2+) binding site. Lys-172 and Asp-179 together coordinate deamido-NAD(+). Lys-188 and Thr-210 together coordinate ATP. A deamido-NAD(+)-binding site is contributed by His-259–Lys-260.

The protein belongs to the NAD synthetase family. In terms of assembly, homodimer.

It catalyses the reaction deamido-NAD(+) + NH4(+) + ATP = AMP + diphosphate + NAD(+) + H(+). The protein operates within cofactor biosynthesis; NAD(+) biosynthesis; NAD(+) from deamido-NAD(+) (ammonia route): step 1/1. Functionally, catalyzes the ATP-dependent amidation of deamido-NAD to form NAD. Uses ammonia as a nitrogen source. In Staphylococcus epidermidis (strain ATCC 35984 / DSM 28319 / BCRC 17069 / CCUG 31568 / BM 3577 / RP62A), this protein is NH(3)-dependent NAD(+) synthetase.